The sequence spans 63 residues: Cecropin-A1 (63 aa).

A signal peptide spans 1–23 (MKFYNIFVFVALILAITIGQSEA). Arg62 is subject to Arginine amide.

It belongs to the cecropin family.

Its subcellular location is the secreted. Cecropins have lytic and antibacterial activity against several Gram-positive and Gram-negative bacteria. This Drosophila mauritiana (Fruit fly) protein is Cecropin-A1 (CecA1).